The sequence spans 829 residues: Disintegrin and metalloproteinase domain-containing protein 23 (829 aa).

The N-terminal stretch at Met1–Ser55 is a signal peptide. A propeptide spanning residues Ser56–Arg283 is cleaved from the precursor. N-linked (GlcNAc...) asparagine glycosylation is found at Asn72, Asn92, Asn97, and Asn260. Topologically, residues Ala284–Asn789 are extracellular. The region spanning Lys296–Pro493 is the Peptidase M12B domain. Cystine bridges form between Cys405/Cys488, Cys447/Cys472, and Cys449/Cys456. A Disintegrin domain is found at Pro499 to Asp585. N-linked (GlcNAc...) asparagine glycosylation is found at Asn544 and Asn545. The cysteines at positions 557 and 577 are disulfide-linked. Residues Asn661 and Asn729 are each glycosylated (N-linked (GlcNAc...) asparagine). The 38-residue stretch at Asn729 to Ser766 folds into the EGF-like domain. Intrachain disulfides connect Cys733-Cys748, Cys742-Cys754, and Cys756-Cys765. Residues Leu790 to Gly810 form a helical membrane-spanning segment. The Cytoplasmic segment spans residues Trp811–Ile829.

Can bind to LGI1 and LGI4. Brain specific.

It localises to the cell membrane. Its subcellular location is the secreted. May play a role in cell-cell and cell-matrix interactions. This is a non-catalytic metalloprotease-like protein. This is Disintegrin and metalloproteinase domain-containing protein 23 (Adam23) from Mus musculus (Mouse).